The primary structure comprises 325 residues: Tetraacyldisaccharide 4'-kinase (325 aa).

55–62 (TAGGNGKT) lines the ATP pocket.

Belongs to the LpxK family.

The enzyme catalyses a lipid A disaccharide + ATP = a lipid IVA + ADP + H(+). Its pathway is glycolipid biosynthesis; lipid IV(A) biosynthesis; lipid IV(A) from (3R)-3-hydroxytetradecanoyl-[acyl-carrier-protein] and UDP-N-acetyl-alpha-D-glucosamine: step 6/6. In terms of biological role, transfers the gamma-phosphate of ATP to the 4'-position of a tetraacyldisaccharide 1-phosphate intermediate (termed DS-1-P) to form tetraacyldisaccharide 1,4'-bis-phosphate (lipid IVA). In Salmonella enteritidis PT4 (strain P125109), this protein is Tetraacyldisaccharide 4'-kinase.